Consider the following 207-residue polypeptide: Sodium/potassium-transporting ATPase subunit beta-1-interacting protein 1 (207 aa).

The first 21 residues, M1–A21, serve as a signal peptide directing secretion. Residues L22–W34 are Extracellular-facing. Residues A35 to V55 traverse the membrane as a helical segment. Topologically, residues Q56 to Y61 are cytoplasmic. A helical transmembrane segment spans residues L62–F82. Residues Y83 to E146 lie on the Extracellular side of the membrane. A glycan (N-linked (GlcNAc...) asparagine) is linked at N100. Residues A147–V167 traverse the membrane as a helical segment. Over S168–G207 the chain is Cytoplasmic.

It belongs to the NKAIN family. Interacts with ATP1B1 C-terminus.

Its subcellular location is the cell membrane. This Homo sapiens (Human) protein is Sodium/potassium-transporting ATPase subunit beta-1-interacting protein 1 (NKAIN1).